The chain runs to 128 residues: uncharacterized protein (128 aa).

This is an uncharacterized protein from Mycobacterium tuberculosis (strain CDC 1551 / Oshkosh).